Consider the following 403-residue polypeptide: MSQVKIGQFKFGQDTFTLRYVLGGEQQVKFVAKDIASNLKHANCAEAVRKHVDGKYKSTFEHGEIRSHLASNALAKQGDPLYLHPHTVLVTKEGVIQLIMKSKLPYAVELQAWLLEEVIPQVLCTGKYDPAIKHQQEETKRMTDRLIKVFTDHTTTLHAALVKKEKFVEFVVESNNKQIEAKNKLIEAKDQHVTRVMTDLNRMYSSFQDTMQRKDDIMKRKDEIIQKKDEQFQETMQKKDEQFKETIQKKDEQFKETIQKKDEQFQEIIQKKDAQLQETIQRKDEQIARLIDAAMDLSSRAVQYPADERKHPVLCVARDGTTFHGIAGQRRYVQSQKRKLGVKDDDLVLETRRPNPALDWTNATHTTSAVKRSKRSITFDSPEEAQLFEDTIKYLLSVDSVHK.

A Bro-N domain is found at 3–126; sequence QVKIGQFKFG…EVIPQVLCTG (124 aa).

This is an uncharacterized protein from Lepidoptera (butterflies and moths).